We begin with the raw amino-acid sequence, 469 residues long: RNA-editing ligase 1, mitochondrial (469 aa).

Residues 1–44 constitute a mitochondrion transit peptide; the sequence is MQLQRLGAPLLKRLVGGCIRQSTAPIMPCVVVSGSGVFLTPVRT. ATP contacts are provided by residues 59–61, 86–92, R111, E159, F209, and 307–309; these read IEI, EKVHGTN, and KLR. K87 acts as the N6-AMP-lysine intermediate in catalysis. A disordered region spans residues 450–469; that stretch reads AAAQSEAIPPLSPAAPTKGE.

This sequence belongs to the RNA ligase 2 family. In terms of assembly, component of the RNA editing complex (editosome), a 1600 kDa complex composed of at least 20 proteins. Interacts with terminal uridylyltransferase MEAT1.

The protein resides in the mitochondrion. The enzyme catalyses ATP + (ribonucleotide)n-3'-hydroxyl + 5'-phospho-(ribonucleotide)m = (ribonucleotide)n+m + AMP + diphosphate.. Its function is as follows. Essential for RNA editing. RNA editing in kinetoplastid mitochondria inserts and deletes uridylates at multiple sites in pre-mRNAs as directed by guide RNAs. The protein is RNA-editing ligase 1, mitochondrial (REL1) of Trypanosoma brucei brucei.